A 95-amino-acid polypeptide reads, in one-letter code: MLHTLPHCASSVDFPALLRLLKEGDALLLLQDGVTVAIEGNRFLESLRDAPITVYALKEDIDARGLGGQISDSVVRVDYTDFVRLTVKYANQMAW.

This sequence belongs to the DsrH/TusB family. Heterohexamer, formed by a dimer of trimers. The hexameric TusBCD complex contains 2 copies each of TusB, TusC and TusD. The TusBCD complex interacts with TusE.

It localises to the cytoplasm. Functionally, part of a sulfur-relay system required for 2-thiolation of 5-methylaminomethyl-2-thiouridine (mnm(5)s(2)U) at tRNA wobble positions. This Salmonella dublin (strain CT_02021853) protein is Protein TusB.